The primary structure comprises 637 residues: DNA mismatch repair protein MutL (637 aa).

It belongs to the DNA mismatch repair MutL/HexB family.

Functionally, this protein is involved in the repair of mismatches in DNA. It is required for dam-dependent methyl-directed DNA mismatch repair. May act as a 'molecular matchmaker', a protein that promotes the formation of a stable complex between two or more DNA-binding proteins in an ATP-dependent manner without itself being part of a final effector complex. This chain is DNA mismatch repair protein MutL, found in Actinobacillus succinogenes (strain ATCC 55618 / DSM 22257 / CCUG 43843 / 130Z).